Reading from the N-terminus, the 227-residue chain is DnaJ homolog subfamily B member 8 (227 aa).

Positions 3–69 (NYYEVLGVQS…KKRSVYDRAG (67 aa)) constitute a J domain.

As to quaternary structure, interacts with histone deacetylases HDAC4, HDAC6, and SIRT2, HDAC activity is required for antiaggregation.

Functionally, efficient suppressor of aggregation and toxicity of disease-associated polyglutamine proteins. This is DnaJ homolog subfamily B member 8 (Dnajb8) from Mus musculus (Mouse).